A 59-amino-acid polypeptide reads, in one-letter code: MTESPQFDRRMLEALVCPVSQSGLSYDAERQELVSRQARLAFPIRDGIPIMLVSEAREL.

Belongs to the UPF0434 family.

This Cereibacter sphaeroides (strain ATCC 17025 / ATH 2.4.3) (Rhodobacter sphaeroides) protein is UPF0434 protein Rsph17025_2896.